The following is a 144-amino-acid chain: Large ribosomal subunit protein uL13 (144 aa).

Belongs to the universal ribosomal protein uL13 family. Part of the 50S ribosomal subunit.

This protein is one of the early assembly proteins of the 50S ribosomal subunit, although it is not seen to bind rRNA by itself. It is important during the early stages of 50S assembly. This Nitrosomonas europaea (strain ATCC 19718 / CIP 103999 / KCTC 2705 / NBRC 14298) protein is Large ribosomal subunit protein uL13.